A 24-amino-acid polypeptide reads, in one-letter code: Humanin-like 11 (24 aa).

The protein belongs to the humanin family.

The protein localises to the secreted. Its subcellular location is the cytoplasm. Plays a role as a neuroprotective and antiapoptotic factor. The polypeptide is Humanin-like 11 (Homo sapiens (Human)).